We begin with the raw amino-acid sequence, 132 residues long: Fatty acid-binding protein, intestinal (132 aa).

An N-acetylalanine modification is found at alanine 2. Hexadecanoate-binding residues include tryptophan 83 and arginine 107. Residues tryptophan 83 and arginine 107 each coordinate tetradecanoate.

The protein belongs to the calycin superfamily. Fatty-acid binding protein (FABP) family. In terms of tissue distribution, expressed in the small intestine and at much lower levels in the large intestine. Highest expression levels in the jejunum.

The protein localises to the cytoplasm. FABPs are thought to play a role in the intracellular transport of long-chain fatty acids and their acyl-CoA esters. FABP2 is probably involved in triglyceride-rich lipoprotein synthesis. Binds saturated long-chain fatty acids with a high affinity, but binds with a lower affinity to unsaturated long-chain fatty acids. FABP2 may also help maintain energy homeostasis by functioning as a lipid sensor. The polypeptide is Fatty acid-binding protein, intestinal (FABP2) (Homo sapiens (Human)).